The following is a 114-amino-acid chain: Protein vCCL3 (114 aa).

The signal sequence occupies residues methionine 1 to alanine 26.

Its function is as follows. Acts as a highly selective agonist for human lymphoactin receptor XCR1. This Human herpesvirus 8 type P (isolate GK18) (HHV-8) protein is Protein vCCL3 (K4.1).